A 222-amino-acid polypeptide reads, in one-letter code: Glutathione S-transferase A3 (222 aa).

An N-acetylalanine modification is found at alanine 2. The GST N-terminal domain occupies 3 to 83 (GKPKLHYFNG…YIASKYNLYG (81 aa)). An N6-succinyllysine modification is found at lysine 4. Residues tyrosine 9, arginine 45, 54-55 (QV), and 67-68 (QT) contribute to the glutathione site. A GST C-terminal domain is found at 85 to 207 (DIKERALIDM…LQPGSPRKPP (123 aa)).

This sequence belongs to the GST superfamily. Alpha family. As to quaternary structure, homodimer.

It is found in the cytoplasm. The enzyme catalyses RX + glutathione = an S-substituted glutathione + a halide anion + H(+). It catalyses the reaction androst-5-ene-3,17-dione = androst-4-ene-3,17-dione. The catalysed reaction is pregn-5-ene-3,20-dione = progesterone. Conjugation of reduced glutathione to a wide number of exogenous and endogenous hydrophobic electrophiles. Catalyzes isomerization reactions that contribute to the biosynthesis of steroid hormones. Efficiently catalyze obligatory double-bond isomerizations of delta(5)-androstene-3,17-dione and delta(5)-pregnene-3,20-dione, precursors to testosterone and progesterone, respectively. Has substantial activity toward aflatoxin B1-8,9-epoxide. The protein is Glutathione S-transferase A3 of Homo sapiens (Human).